The chain runs to 614 residues: Probable pectinesterase/pectinesterase inhibitor 13 (614 aa).

Residues 25 to 45 traverse the membrane as a helical segment; sequence IIVGTVSLLVVVAAIVGGAFA. Residues 55 to 102 form a disordered region; sequence QQQQQQQAKNHNKSGSGNNVVKDSDKKSPSPPTPSQKAPVSAAQSVKP. N-linked (GlcNAc...) asparagine glycans are attached at residues N66, N128, N197, N243, N301, N351, and N367. The pectinesterase inhibitor 13 stretch occupies residues 103–255; it reads GQGDKIIQTL…QVLTSNSLAL (153 aa). The interval 301-598 is pectinesterase 13; the sequence is NATVAKDGSG…YTVGPFLQGD (298 aa). Positions 376 and 406 each coordinate substrate. The active-site Proton donor; for pectinesterase activity is the D429. A disulfide bridge links C443 with C463. Catalysis depends on D450, which acts as the Nucleophile; for pectinesterase activity. Residues R518 and W520 each contribute to the substrate site. N522 and N588 each carry an N-linked (GlcNAc...) asparagine glycan.

It in the N-terminal section; belongs to the PMEI family. The protein in the C-terminal section; belongs to the pectinesterase family. In terms of tissue distribution, expressed in flower buds.

The protein localises to the membrane. It carries out the reaction [(1-&gt;4)-alpha-D-galacturonosyl methyl ester](n) + n H2O = [(1-&gt;4)-alpha-D-galacturonosyl](n) + n methanol + n H(+). It participates in glycan metabolism; pectin degradation; 2-dehydro-3-deoxy-D-gluconate from pectin: step 1/5. Acts in the modification of cell walls via demethylesterification of cell wall pectin. The chain is Probable pectinesterase/pectinesterase inhibitor 13 (PME13) from Arabidopsis thaliana (Mouse-ear cress).